The primary structure comprises 387 residues: Acyl-[acyl-carrier-protein] 6-desaturase (387 aa).

A chloroplast-targeting transit peptide spans M1 to R29. E131, E169, H172, E222, E255, and H258 together coordinate Fe cation.

The protein belongs to the fatty acid desaturase type 2 family. Requires Fe(2+) as cofactor.

Its subcellular location is the plastid. The protein localises to the chloroplast. The catalysed reaction is hexadecanoyl-[ACP] + 2 reduced [2Fe-2S]-[ferredoxin] + O2 + 2 H(+) = (6Z)-hexadecenoyl-[ACP] + 2 oxidized [2Fe-2S]-[ferredoxin] + 2 H2O. It participates in lipid metabolism; fatty acid metabolism. Inhibited by KCN or H(2)O(2). Its function is as follows. Delta(6) fatty acid desaturase introducing a cis double bond at carbon 6 of palmitoyl-[acyl-carrier protein](16:0-ACP), producing 16:1(6Z)-ACP. No activity with the coenzyme A ester of the fatty acid. The position of the double bond is determined by its distance from the carboxyl end of the fatty acid. Low activity with several saturated acyl-[acyl-carrier protein]s, including 14:0-ACP and 18:0-ACP. Requires reduced ferredoxin for detectable in vitro activity. This Thunbergia alata (Black-eyed Susan vine) protein is Acyl-[acyl-carrier-protein] 6-desaturase.